A 64-amino-acid polypeptide reads, in one-letter code: Conotoxin Ca5.3 (64 aa).

The first 22 residues, 1-22 (MRCVPVFIILLLLIASAPGVDA), serve as a signal peptide directing secretion. The propeptide occupies 23–48 (QPKTKYNAPLTSLHDNAKGILQEHWN). Ile-61 is modified (isoleucine amide).

The protein belongs to the conotoxin T superfamily. In terms of processing, contains 2 disulfide bonds that can be either 'C1-C3, C2-C4' or 'C1-C4, C2-C3', since these disulfide connectivities have been observed for conotoxins with cysteine framework V (for examples, see AC P0DQQ7 and AC P81755). As to expression, expressed by the venom duct.

It is found in the secreted. The protein is Conotoxin Ca5.3 of Conus caracteristicus (Characteristic cone).